Consider the following 120-residue polypeptide: Large ribosomal subunit protein bL12 (120 aa).

The protein belongs to the bacterial ribosomal protein bL12 family. As to quaternary structure, homodimer. Part of the ribosomal stalk of the 50S ribosomal subunit. Forms a multimeric L10(L12)X complex, where L10 forms an elongated spine to which 2 to 4 L12 dimers bind in a sequential fashion. Binds GTP-bound translation factors.

In terms of biological role, forms part of the ribosomal stalk which helps the ribosome interact with GTP-bound translation factors. Is thus essential for accurate translation. The protein is Large ribosomal subunit protein bL12 of Lactobacillus helveticus (strain DPC 4571).